An 899-amino-acid chain; its full sequence is Inositol 1,4,5-triphosphate receptor associated 1 (899 aa).

4 disordered regions span residues 32–110, 164–286, 324–391, and 463–486; these read PGTH…HRHL, RRGR…PLQH, KTAR…EEPG, and AAEQ…SKSG. Positions 100–110 are enriched in basic residues; it reads SPHRRLSHRHL. Residue Ser-106 is modified to Phosphoserine. The interval 140–172 is interaction with PRKG1; sequence SEEDKKKNLALLEEAKLVSERFLTRRGRKSRSS. Residues 171–180 are compositionally biased toward polar residues; the sequence is SSLGDSPSAV. Over residues 181 to 203 the composition is skewed to low complexity; the sequence is SPNLSSGASPASSRSCSLTISTS. The span at 266 to 281 shows a compositional bias: basic and acidic residues; that stretch reads TVEKTKELTVEQKENF. Over residues 333–351 the composition is skewed to polar residues; sequence PRTTAQGSGGTVSPHSLGQ. Ser-382 carries the post-translational modification Phosphoserine. Residues 521–567 form an interaction with ITPR1 region; that stretch reads NVFVQLSLAFRNDSYTLESRINQAERERNLTEENTEKELENFKASIT. Residues 534-632 adopt a coiled-coil conformation; sequence SYTLESRINQ…MQYVENLKRT (99 aa). Residues Ser-670 and Ser-683 each carry the phosphoserine modification. Disordered regions lie at residues 695–722 and 757–818; these read LPGQ…SSIS and TSQE…DQGS. Residues 699–715 are compositionally biased toward low complexity; that stretch reads APSSSPMPSLPALSESS. Composition is skewed to basic and acidic residues over residues 759–770 and 777–787; these read QETKAKAEEEAY and GVKKTEELQDL. A compositionally biased stretch (acidic residues) spans 788-814; it reads KEEEEEEQKTESPEEPEEVEETQEDEK. The chain crosses the membrane as a helical span at residues 839-859; the sequence is WQVIWMMAAVMLVLSVVLGLY. Residues 867-899 are disordered; sequence EEADGPPGRSTCSAAQRDSWWSSGLQQELPAEQ. Residues 876–892 show a composition bias toward polar residues; that stretch reads STCSAAQRDSWWSSGLQ.

In terms of assembly, part of cGMP kinase signaling complex at least composed of ACTA2/alpha-actin, CNN1/calponin H1, PLN/phospholamban, PRKG1 and ITPR1. Interacts with PRKG1/cGKI-beta and ITPR1/IP3R type I. Interacts with HCN4; regulates HCN4 channel activity. Post-translationally, phosphorylated by PRKG1/cGKI. As to expression, highly expressed in smooth muscle such as aorta, colon and uterus. Detected in the brain, in the thalamus, in the hippocampus and myenteric plexus. Highly expressed in megakaryocytes. Down-regulated during macrophage differentiation.

It is found in the membrane. The protein resides in the cytoplasm. The protein localises to the perinuclear region. It localises to the sarcoplasmic reticulum. In terms of biological role, plays a role as NO/PRKG1-dependent regulator of IP3-induced calcium release; its phosphorylation by PRKG1 inhibits bradykinin and IP3-induced calcium release from intracellular stores. Recruits PRKG1 to the endoplasmic reticulum and may mediate the assembly of PRKG1 and ITPR1 in a macrocomplex. Involved in PRKG1 signaling cascade leading to inhibition of platelet activation and aggregation. Also mediates NO-dependent inhibition of calcium signaling in gastrointestinal smooth muscle contributing to NO-dependent relaxation. Plays a role in the regulation of cellular excitability by regulating the hyperpolarization-activated cyclic nucleotide-gated HCN4 channel activity. This Mus musculus (Mouse) protein is Inositol 1,4,5-triphosphate receptor associated 1 (Irag1).